An 872-amino-acid polypeptide reads, in one-letter code: UPF0182 protein Noc_0961 (872 aa).

A run of 7 helical transmembrane segments spans residues Phe8 to Glu28, Leu56 to Val76, Ser109 to Phe129, Leu159 to Leu179, Trp207 to Gln227, Pro254 to Ile274, and Thr282 to Leu302.

This sequence belongs to the UPF0182 family.

The protein resides in the cell membrane. The chain is UPF0182 protein Noc_0961 from Nitrosococcus oceani (strain ATCC 19707 / BCRC 17464 / JCM 30415 / NCIMB 11848 / C-107).